The chain runs to 388 residues: Chorismate synthase (388 aa).

Arg39 and Arg45 together coordinate NADP(+). Residues 130 to 132, 251 to 252, Gly296, 311 to 315, and Arg337 contribute to the FMN site; these read RSS, NA, and KPIPT.

It belongs to the chorismate synthase family. As to quaternary structure, homotetramer. It depends on FMNH2 as a cofactor.

It catalyses the reaction 5-O-(1-carboxyvinyl)-3-phosphoshikimate = chorismate + phosphate. It functions in the pathway metabolic intermediate biosynthesis; chorismate biosynthesis; chorismate from D-erythrose 4-phosphate and phosphoenolpyruvate: step 7/7. Catalyzes the anti-1,4-elimination of the C-3 phosphate and the C-6 proR hydrogen from 5-enolpyruvylshikimate-3-phosphate (EPSP) to yield chorismate, which is the branch point compound that serves as the starting substrate for the three terminal pathways of aromatic amino acid biosynthesis. This reaction introduces a second double bond into the aromatic ring system. The sequence is that of Chorismate synthase from Streptococcus agalactiae serotype III (strain NEM316).